We begin with the raw amino-acid sequence, 94 residues long: uncharacterized protein (94 aa).

2 helical membrane passes run 9 to 29 and 34 to 54; these read TLAK…FFST and LIEL…VFIV.

It localises to the cell membrane. This is an uncharacterized protein from Bacillus subtilis (strain 168).